A 146-amino-acid polypeptide reads, in one-letter code: Prolactin-inducible protein homolog (146 aa).

Positions 1 to 28 are cleaved as a signal peptide; that stretch reads MRLLQFLFRASPATLLLVLCLHLGANKA. Residue Q29 is modified to Pyrrolidone carboxylic acid. 2 cysteine pairs are disulfide-bonded: C65–C91 and C89–C123. An N-linked (GlcNAc...) asparagine glycan is attached at N105.

It belongs to the PIP family. In terms of assembly, monomer. Interacts with AZGP1.

The protein localises to the secreted. The chain is Prolactin-inducible protein homolog (PIP) from Macaca fuscata fuscata (Japanese macaque).